The sequence spans 147 residues: Microtubule-associated protein 1 light chain 3 gamma (147 aa).

A phosphoserine; by TBK1 mark is found at Ser93 and Ser96. Gly126 carries Phosphatidylethanolamine amidated glycine; alternate lipidation. Gly126 carries the Phosphatidylserine amidated glycine; alternate lipid modification. Positions 127–147 (CLESAAPRDGSSLEDRPCNPL) are cleaved as a propeptide — removed in mature form.

The protein belongs to the ATG8 family. As to quaternary structure, 3 different light chains, LC1 (a cleavage product of MAP1B), LC2 (a cleavage product of MAP1A) and LC3 (produced by one of the MAP1LC3 genes), can associate with the MAP1A or MAP1B heavy chains. Interacts with TP53INP1 and TP53INP2. Interacts with CALCOCO2. Interacts with TECPR2. Interacts with TBC1D5. Found in a complex with UBQLN1 and UBQLN2. Interacts with UBQLN4 (via STI1 1 and 2 domains). Interacts with UBQLN1 in the presence of UBQLN4. Interacts with TRIM5. Interacts with ATG13. Interacts with MEFV and TRIM21. Interacts with WDR81; recruits MAP1LC3C to ubiquitinated protein aggregates in the aggrephagy process. Interacts with MOAP1 (via LIR motif). Interacts with reticulophagy regulators RETREG1, RETREG2 and RETREG3. Interacts with TAX1BP1. Interacts with IRGM. Interacts with SPART. Post-translationally, the precursor molecule is cleaved by ATG4 (ATG4A, ATG4B, ATG4C or ATG4D) to expose the glycine at the C-terminus and form the cytosolic form, LC3-I. The processed form is then activated by APG7L/ATG7, transferred to ATG3 and conjugated to phosphatidylethanolamine (PE) phospholipid to form the membrane-bound form, LC3-II. During non-canonical autophagy, the processed form is conjugated to phosphatidylserine (PS) phospholipid. ATG4 proteins also mediate the delipidation of PE-conjugated forms. In addition, ATG4B and ATG4D mediate delipidation of ATG8 proteins conjugated to PS during non-canonical autophagy. In terms of processing, (Microbial infection) The Legionella effector RavZ is a deconjugating enzyme that hydrolyzes the amide bond between the C-terminal glycine residue and an adjacent aromatic residue in ATG8 proteins conjugated to phosphatidylethanolamine (PE), producing an ATG8 protein that is resistant to reconjugation by the host machinery due to the cleavage of the reactive C-terminal glycine. RavZ is also able to mediate delipidation of ATG8 proteins conjugated to phosphatidylserine (PS). Phosphorylation at Ser-96 and Ser-98 by TBK1 prevents interaction with ATG4 (ATG4A, ATG4B, ATG4C or ATG4D). Phosphorylation by TBK1 on autophagosomes prevents their delipidation by ATG4 and premature removal from nascent autophagosomes. As to expression, most abundant in placenta, lung and ovary.

Its subcellular location is the cytoplasmic vesicle. The protein resides in the autophagosome membrane. It is found in the endomembrane system. The protein localises to the cytoplasm. It localises to the cytoskeleton. Ubiquitin-like modifier that plays a crucial role in antibacterial autophagy (xenophagy) through the selective binding of CALCOCO2. Recruits all ATG8 family members to infecting bacteria such as S.typhimurium. May also play a role in aggrephagy, the macroautophagic degradation of ubiquitinated and aggregated proteins. The polypeptide is Microtubule-associated protein 1 light chain 3 gamma (MAP1LC3C) (Homo sapiens (Human)).